A 363-amino-acid polypeptide reads, in one-letter code: Holliday junction branch migration complex subunit RuvB (363 aa).

Positions 1–44 are disordered; sequence MAIKRNQGHGLPPKRDPALGRDALTTSQALPEDQEQSANEDRIR. The large ATPase domain (RuvB-L) stretch occupies residues 13–204; it reads PKRDPALGRD…FGLIQRLRFY (192 aa). Residues isoleucine 43, arginine 44, glycine 85, lysine 88, threonine 89, threonine 90, arginine 194, tyrosine 204, and arginine 241 each coordinate ATP. Mg(2+) is bound at residue threonine 89. The small ATPAse domain (RuvB-S) stretch occupies residues 205–275; that stretch reads EVDELIAIVH…VAATALDLYN (71 aa). The head domain (RuvB-H) stretch occupies residues 278–363; it reads ALGLDWTDRL…EQSTQLDFLP (86 aa). 2 residues coordinate DNA: arginine 333 and arginine 338.

This sequence belongs to the RuvB family. Homohexamer. Forms an RuvA(8)-RuvB(12)-Holliday junction (HJ) complex. HJ DNA is sandwiched between 2 RuvA tetramers; dsDNA enters through RuvA and exits via RuvB. An RuvB hexamer assembles on each DNA strand where it exits the tetramer. Each RuvB hexamer is contacted by two RuvA subunits (via domain III) on 2 adjacent RuvB subunits; this complex drives branch migration. In the full resolvosome a probable DNA-RuvA(4)-RuvB(12)-RuvC(2) complex forms which resolves the HJ.

The protein localises to the cytoplasm. The enzyme catalyses ATP + H2O = ADP + phosphate + H(+). Functionally, the RuvA-RuvB-RuvC complex processes Holliday junction (HJ) DNA during genetic recombination and DNA repair, while the RuvA-RuvB complex plays an important role in the rescue of blocked DNA replication forks via replication fork reversal (RFR). RuvA specifically binds to HJ cruciform DNA, conferring on it an open structure. The RuvB hexamer acts as an ATP-dependent pump, pulling dsDNA into and through the RuvAB complex. RuvB forms 2 homohexamers on either side of HJ DNA bound by 1 or 2 RuvA tetramers; 4 subunits per hexamer contact DNA at a time. Coordinated motions by a converter formed by DNA-disengaged RuvB subunits stimulates ATP hydrolysis and nucleotide exchange. Immobilization of the converter enables RuvB to convert the ATP-contained energy into a lever motion, pulling 2 nucleotides of DNA out of the RuvA tetramer per ATP hydrolyzed, thus driving DNA branch migration. The RuvB motors rotate together with the DNA substrate, which together with the progressing nucleotide cycle form the mechanistic basis for DNA recombination by continuous HJ branch migration. Branch migration allows RuvC to scan DNA until it finds its consensus sequence, where it cleaves and resolves cruciform DNA. The polypeptide is Holliday junction branch migration complex subunit RuvB (Picosynechococcus sp. (strain ATCC 27264 / PCC 7002 / PR-6) (Agmenellum quadruplicatum)).